A 273-amino-acid polypeptide reads, in one-letter code: Ribosomal RNA small subunit methyltransferase A (273 aa).

The S-adenosyl-L-methionine site is built by Asn17, Leu19, Gly44, Glu65, and Asn111.

It belongs to the class I-like SAM-binding methyltransferase superfamily. rRNA adenine N(6)-methyltransferase family. RsmA subfamily.

It is found in the cytoplasm. The enzyme catalyses adenosine(1518)/adenosine(1519) in 16S rRNA + 4 S-adenosyl-L-methionine = N(6)-dimethyladenosine(1518)/N(6)-dimethyladenosine(1519) in 16S rRNA + 4 S-adenosyl-L-homocysteine + 4 H(+). Its function is as follows. Specifically dimethylates two adjacent adenosines (A1518 and A1519) in the loop of a conserved hairpin near the 3'-end of 16S rRNA in the 30S particle. May play a critical role in biogenesis of 30S subunits. The sequence is that of Ribosomal RNA small subunit methyltransferase A from Buchnera aphidicola subsp. Acyrthosiphon pisum (strain APS) (Acyrthosiphon pisum symbiotic bacterium).